Here is a 357-residue protein sequence, read N- to C-terminus: Red-sensitive opsin (357 aa).

Residues 1 to 49 (MAEQWGKQVFAARRQNEDTTRGSAFTYTNSNHTRDPFEGPNYHIAPRWV) are Extracellular-facing. Asn31 is a glycosylation site (N-linked (GlcNAc...) asparagine). The chain crosses the membrane as a helical span at residues 50–74 (YNLATLWMFFVVVLSVFTNGLVLVA). The Cytoplasmic portion of the chain corresponds to 75-86 (TAKFKKLRHPLN). The helical transmembrane segment at 87–112 (WILSNLAIADLGETVFASTISVCNQF) threads the bilayer. At 113–126 (FGYFILGHPMCVFE) the chain is on the extracellular side. An intrachain disulfide couples Cys123 to Cys200. Residues 127 to 146 (GYVVSTCGIAALWSLTIISW) traverse the membrane as a helical segment. At 147-165 (ERWVVVCKPFGNVKFDAKW) the chain is on the cytoplasmic side. The chain crosses the membrane as a helical span at residues 166-189 (AIGGIVFSWVWSAVWCAPPVFGWS). The Extracellular portion of the chain corresponds to 190 to 215 (RYWPHGLKTSCGPDVFSGSDDPGVQS). Residues 216–243 (YMIVLMITCCIIPLAIIILCYLAVWLAI) form a helical membrane-spanning segment. Residues 244 to 265 (RAVAMQQKESESTQKAEREVSR) lie on the Cytoplasmic side of the membrane. A helical transmembrane segment spans residues 266-289 (MVVVMIVAYCVCWGPYTFFACFAA). The Extracellular segment spans residues 290 to 297 (ANPGYAFH). Residues 298 to 322 (PLAAAMPAYFAKSATIYNPVIYVFM) traverse the membrane as a helical segment. Lys309 is modified (N6-(retinylidene)lysine). At 323–357 (NRQFRTCIMQLFGKQVDDGSEVSTSKTEVSSVAPA) the chain is on the cytoplasmic side.

This sequence belongs to the G-protein coupled receptor 1 family. Opsin subfamily. Post-translationally, phosphorylated on some or all of the serine and threonine residues present in the C-terminal region. In terms of tissue distribution, the color pigments are found in the cone photoreceptor cells.

The protein localises to the membrane. In terms of biological role, visual pigments are the light-absorbing molecules that mediate vision. They consist of an apoprotein, opsin, covalently linked to cis-retinal. The sequence is that of Red-sensitive opsin from Oryzias latipes (Japanese rice fish).